The chain runs to 55 residues: Large ribosomal subunit protein bL33 (55 aa).

Belongs to the bacterial ribosomal protein bL33 family.

This Nitrobacter hamburgensis (strain DSM 10229 / NCIMB 13809 / X14) protein is Large ribosomal subunit protein bL33 (rpmG).